A 66-amino-acid polypeptide reads, in one-letter code: DNA-directed RNA polymerase subunit Rpo10 (66 aa).

Zn(2+) is bound by residues C7, C10, C44, and C45.

It belongs to the archaeal Rpo10/eukaryotic RPB10 RNA polymerase subunit family. Part of the RNA polymerase complex. Zn(2+) serves as cofactor.

Its subcellular location is the cytoplasm. It carries out the reaction RNA(n) + a ribonucleoside 5'-triphosphate = RNA(n+1) + diphosphate. In terms of biological role, DNA-dependent RNA polymerase (RNAP) catalyzes the transcription of DNA into RNA using the four ribonucleoside triphosphates as substrates. The sequence is that of DNA-directed RNA polymerase subunit Rpo10 from Staphylothermus marinus (strain ATCC 43588 / DSM 3639 / JCM 9404 / F1).